The chain runs to 277 residues: S-formylglutathione hydrolase FrmB (277 aa).

Catalysis depends on charge relay system residues serine 145, aspartate 221, and histidine 254.

The protein belongs to the esterase D family.

The catalysed reaction is S-formylglutathione + H2O = formate + glutathione + H(+). Functionally, serine hydrolase involved in the detoxification of formaldehyde. Hydrolyzes S-formylglutathione to glutathione and formate. The sequence is that of S-formylglutathione hydrolase FrmB (frmB) from Escherichia coli O9:H4 (strain HS).